The chain runs to 330 residues: Autoinducer 2 import system permease protein LsrD (330 aa).

At 1 to 4 the chain is on the cytoplasmic side; sequence MRIR. A helical transmembrane segment spans residues 5–25; that stretch reads YGWELALAALLVIEIVAFGAI. The Periplasmic portion of the chain corresponds to 26–42; it reads NPRMLDLNMLLFSTSDF. A helical transmembrane segment spans residues 43-63; the sequence is ICIGIVALPLTMVIVSGGIDI. At 64–67 the chain is on the cytoplasmic side; that stretch reads SFGS. 2 consecutive transmembrane segments (helical) span residues 68-88 and 89-109; these read TIGL…PMPL and AILL…GLII. Residues 110–115 are Cytoplasmic-facing; it reads YTKVNP. The helical transmembrane segment at 116-136 threads the bilayer; it reads LVITLGTLYLFAGSALLLSGM. Topologically, residues 137 to 159 are periplasmic; sequence AGATGYEGIGGFPMAFTDFANLD. The chain crosses the membrane as a helical span at residues 160 to 180; it reads VLGLPVPLIIFLICLLVFWLW. The Cytoplasmic portion of the chain corresponds to 181–209; it reads LHKTHAGRNVFLIGQSPRVAVYSAIPVNR. A helical membrane pass occupies residues 210 to 230; the sequence is TLCALYAMTGLASAVAAVLLV. The Periplasmic portion of the chain corresponds to 231-237; it reads SYFGSAR. 2 consecutive transmembrane segments (helical) span residues 238 to 258 and 259 to 279; these read SDLG…GGAN and IYGG…VGYL. Topologically, residues 280 to 285 are periplasmic; the sequence is QQGLQM. Residues 286–306 traverse the membrane as a helical segment; the sequence is AGVPNQVSSALSGALLIVVVV. Residues 307-330 lie on the Cytoplasmic side of the membrane; the sequence is GRSVSLHRQQIKEWLARRANNPLP.

This sequence belongs to the binding-protein-dependent transport system permease family. AraH/RbsC subfamily. The complex is composed of two ATP-binding proteins (LsrA), two transmembrane proteins (LsrC and LsrD) and a solute-binding protein (LsrB).

The protein localises to the cell inner membrane. In terms of biological role, part of the ABC transporter complex LsrABCD involved in autoinducer 2 (AI-2) import. Probably responsible for the translocation of the substrate across the membrane. In Escherichia coli (strain SMS-3-5 / SECEC), this protein is Autoinducer 2 import system permease protein LsrD (lsrD).